A 317-amino-acid chain; its full sequence is Melanocyte-stimulating hormone receptor (317 aa).

Residues 1 to 37 lie on the Extracellular side of the membrane; that stretch reads MPMQGAQRRLLGSLNSIPTATPNLGLAANHTGAPCLE. An N-linked (GlcNAc...) asparagine glycan is attached at N29. Residues 38–63 form a helical membrane-spanning segment; it reads VSIPDWLFLSLGLVSLVQNVLVVAAI. Residues 64-72 are Cytoplasmic-facing; sequence AKNRNLHSP. Residues 73–93 traverse the membrane as a helical segment; sequence MYCFICCLALSDLLVSGSNML. The Extracellular segment spans residues 94 to 118; sequence ETAVILMLEAGALATRASVVQQLQN. A helical membrane pass occupies residues 119–140; sequence TIDVLTCSSMLCSLCFLGAIAL. Residues 141-163 are Cytoplasmic-facing; sequence DRYVSIFYALRYHSIVTLPRARR. A helical membrane pass occupies residues 164 to 183; sequence AIAATWVASVLSSTLFIAYC. The Extracellular segment spans residues 184-191; the sequence is DHAAVLLC. Residues 192-211 traverse the membrane as a helical segment; that stretch reads LVVFFLAMLVLMAVLYVHML. Topologically, residues 212–240 are cytoplasmic; it reads ARACQHAQGITRLHKRQLPAHQGFGLRGA. The helical transmembrane segment at 241–266 threads the bilayer; sequence ATLTILLGIFFLCWGPFFLHLMLVVL. Topologically, residues 267–279 are extracellular; sequence CPQHLTCSCIFKN. The chain crosses the membrane as a helical span at residues 280–300; it reads FKVFLTLIICNTIIDPLIYAF. Residues 301-317 lie on the Cytoplasmic side of the membrane; it reads RSQELCRTLKEVLLCSW. C315 carries the S-palmitoyl cysteine lipid modification.

Belongs to the G-protein coupled receptor 1 family. As to quaternary structure, interacts with MGRN1, but does not undergo MGRN1-mediated ubiquitination; this interaction competes with GNAS-binding and thus inhibits agonist-induced cAMP production. Interacts with OPN3; the interaction results in a decrease in MC1R-mediated cAMP signaling and ultimately a decrease in melanin production in melanocytes.

The protein localises to the cell membrane. Its function is as follows. Receptor for MSH (alpha, beta and gamma) and ACTH. The activity of this receptor is mediated by G proteins which activate adenylate cyclase. Mediates melanogenesis, the production of eumelanin (black/brown) and phaeomelanin (red/yellow), via regulation of cAMP signaling in melanocytes. This chain is Melanocyte-stimulating hormone receptor (MC1R), found in Alouatta seniculus (Red howler monkey).